Here is a 542-residue protein sequence, read N- to C-terminus: DNA-binding protein modulo (542 aa).

The disordered stretch occupies residues 1–166 (MAQKKAVTVK…RGIPKVKVGK (166 aa)). Phosphoserine occurs at positions 42 and 44. Positions 59 to 114 (SEEDESDVEEQNDEQPGDDSDFETEEAAGLIDDEAEEDEEYNSDDEEDDDDDELEP) are enriched in acidic residues. S120, S129, and S142 each carry phosphoserine. The span at 123 to 135 (ADEVDESDDDEEA) shows a compositional bias: acidic residues. Positions 136 to 158 (PVEKPVSKKSEKANSEKSEENRG) are enriched in basic and acidic residues. 4 consecutive RRM domains span residues 175 to 251 (QIVF…QPRN), 258 to 331 (RTVV…RISQ), 340 to 429 (LTLV…NLTS), and 420 to 489 (RAIL…PNSL). S304 bears the Phosphoserine mark. S330 is subject to Phosphoserine; by PKA. A Phosphoserine modification is found at S443. The disordered stretch occupies residues 505-542 (RAPRKFQKDTKPNFGKKPFNKRPAQENGGKSFVKRARF).

Post-translationally, the N-terminus is blocked.

Its subcellular location is the nucleus. In terms of biological role, its capacity to bind DNA and protein(s), and its differential expression during development suggest a role in the regulation of gene expression during Drosophila development. It could, in interaction with other factors, be required for the translation of instructions provided by pattern forming genes and controls, via chromatin changes, the activity of genes critical for the process of morphogenesis of several embryonic territories. The sequence is that of DNA-binding protein modulo (mod) from Drosophila melanogaster (Fruit fly).